The primary structure comprises 470 residues: ATP synthase subunit beta (470 aa).

Residue 155-162 (GGAGVGKT) coordinates ATP.

It belongs to the ATPase alpha/beta chains family. As to quaternary structure, F-type ATPases have 2 components, CF(1) - the catalytic core - and CF(0) - the membrane proton channel. CF(1) has five subunits: alpha(3), beta(3), gamma(1), delta(1), epsilon(1). CF(0) has three main subunits: a(1), b(2) and c(9-12). The alpha and beta chains form an alternating ring which encloses part of the gamma chain. CF(1) is attached to CF(0) by a central stalk formed by the gamma and epsilon chains, while a peripheral stalk is formed by the delta and b chains.

The protein resides in the cell inner membrane. It carries out the reaction ATP + H2O + 4 H(+)(in) = ADP + phosphate + 5 H(+)(out). Functionally, produces ATP from ADP in the presence of a proton gradient across the membrane. The catalytic sites are hosted primarily by the beta subunits. This Oleidesulfovibrio alaskensis (strain ATCC BAA-1058 / DSM 17464 / G20) (Desulfovibrio alaskensis) protein is ATP synthase subunit beta.